Here is a 272-residue protein sequence, read N- to C-terminus: Glycerol-3-phosphate acyltransferase (272 aa).

The next 6 helical transmembrane spans lie at 9–29, 60–80, 99–119, 149–169, 173–193, and 226–246; these read IIILFLFIGYFIGNILFGILI, AIVMVLDFFKSWFSTFVCLLI, VIIYLGGFAAIIGHCFPCFYF, ASISPWMFFICFVLFWSICLI, VSLASIVTVFLLPIWSLIPHL, and LNWWYILVTFLLELLTAVLVI.

The protein belongs to the PlsY family. As to quaternary structure, probably interacts with PlsX.

The protein localises to the cell membrane. The enzyme catalyses an acyl phosphate + sn-glycerol 3-phosphate = a 1-acyl-sn-glycero-3-phosphate + phosphate. It functions in the pathway lipid metabolism; phospholipid metabolism. Catalyzes the transfer of an acyl group from acyl-phosphate (acyl-PO(4)) to glycerol-3-phosphate (G3P) to form lysophosphatidic acid (LPA). This enzyme utilizes acyl-phosphate as fatty acyl donor, but not acyl-CoA or acyl-ACP. In Malacoplasma penetrans (strain HF-2) (Mycoplasma penetrans), this protein is Glycerol-3-phosphate acyltransferase.